The primary structure comprises 266 residues: Putative carbamate hydrolase RutD (266 aa).

Belongs to the AB hydrolase superfamily. Hydrolase RutD family.

It carries out the reaction carbamate + 2 H(+) = NH4(+) + CO2. In terms of biological role, involved in pyrimidine catabolism. May facilitate the hydrolysis of carbamate, a reaction that can also occur spontaneously. The sequence is that of Putative carbamate hydrolase RutD from Escherichia coli O139:H28 (strain E24377A / ETEC).